A 710-amino-acid chain; its full sequence is Probable inactive DNA (cytosine-5)-methyltransferase DRM3 (710 aa).

The tract at residues 1–21 (MADMRRRNGSGGSSNHERNEQ) is disordered. In terms of domain architecture, UBA 1 spans 52-92 (SGSNVKSLLIEMGFCPTLVQKAIDENGQDDFELLLEILTKS). The segment covering 167-184 (ESEDSLDGAEINEEDEDV) has biased composition (acidic residues). The segment at 167 to 192 (ESEDSLDGAEINEEDEDVTPVTARGP) is disordered. Residues 198–242 (QLFETMDKTLRLLEMGFSNDEISMAIEKIGTKGQISVLAESIVTG) form the UBA 2 domain. The disordered stretch occupies residues 282–360 (AQKEDGGGGS…MGDSSSFMET (79 aa)). The segment covering 339–350 (YDDRGKRLRPED) has biased composition (basic and acidic residues). Residues 379–710 (QPRLSQSLGP…RVTKRVRDMM (332 aa)) enclose the SAM-dependent MTase DRM-type domain.

It belongs to the class I-like SAM-binding methyltransferase superfamily. DRM-methyltransferase family. In terms of assembly, interacts with Pol V.

It localises to the nucleus. Functionally, catalytically inactive DNA methyltransferase that acts as regulatory factor for DRM2-mediated DNA methylation. Required for maintenance of non-CpG DNA methylation. Required for normal establishment and maintenance of RNA-directed DNA methylation (RdDM) and accumulation of specific repeat-associated small interfering RNAs (siRNAs). Required for nucleolus organizer region (NOR) nuclear organization during interphase. Acts downstream of the production of siRNAs. May promote RNA polymerase V (Pol V) transcriptional elongation or assist in the stabilization of Pol V transcripts. The polypeptide is Probable inactive DNA (cytosine-5)-methyltransferase DRM3 (Arabidopsis thaliana (Mouse-ear cress)).